Consider the following 370-residue polypeptide: D-alanine--D-alanine ligase (370 aa).

The region spanning 144 to 352 is the ATP-grasp domain; the sequence is KKIFADAGIP…YGALIERLVD (209 aa). Residue 177–232 coordinates ATP; it reads EEVLTYPVFVKPANLGSSVGISKATNKTELIEAMTEAFLYDRRVVVEQGVVAREIE. Mg(2+) is bound by residues aspartate 306, glutamate 319, and asparagine 321.

This sequence belongs to the D-alanine--D-alanine ligase family. It depends on Mg(2+) as a cofactor. The cofactor is Mn(2+).

It is found in the cytoplasm. It catalyses the reaction 2 D-alanine + ATP = D-alanyl-D-alanine + ADP + phosphate + H(+). Its pathway is cell wall biogenesis; peptidoglycan biosynthesis. Cell wall formation. This chain is D-alanine--D-alanine ligase, found in Listeria innocua serovar 6a (strain ATCC BAA-680 / CLIP 11262).